We begin with the raw amino-acid sequence, 67 residues long: Large ribosomal subunit protein bL32 (67 aa).

Basic residues predominate over residues 1–20 (MAVPKRKMSRSNTRARRAKW). Positions 1 to 24 (MAVPKRKMSRSNTRARRAKWKATA) are disordered.

This sequence belongs to the bacterial ribosomal protein bL32 family.

The chain is Large ribosomal subunit protein bL32 from Renibacterium salmoninarum (strain ATCC 33209 / DSM 20767 / JCM 11484 / NBRC 15589 / NCIMB 2235).